A 273-amino-acid polypeptide reads, in one-letter code: Undecaprenyl-diphosphatase (273 aa).

Transmembrane regions (helical) follow at residues 13-35 (GLVE…VFGN), 45-62 (VFEI…VFEY), 82-102 (FVLN…LFGK), 108-128 (LFNP…ILWV), 144-164 (ALRP…LIPG), 186-206 (TEFS…YDVL), 219-239 (LILI…KALL), and 250-270 (FAYY…SGWI).

This sequence belongs to the UppP family.

Its subcellular location is the cell inner membrane. The catalysed reaction is di-trans,octa-cis-undecaprenyl diphosphate + H2O = di-trans,octa-cis-undecaprenyl phosphate + phosphate + H(+). Functionally, catalyzes the dephosphorylation of undecaprenyl diphosphate (UPP). Confers resistance to bacitracin. This chain is Undecaprenyl-diphosphatase, found in Neisseria meningitidis serogroup C (strain 053442).